Here is a 525-residue protein sequence, read N- to C-terminus: MLWLWLGLSGQKLLLWGAASAVSLAGATILISIFPMLVSYARKWQQMRSIPSVARAYPLVGHALYMKPNNAEFFQQLIYYTEEFRHLPIIKLWIGPVPLVALYKAENVEVILTSSKQIDKSFLYKFLQPWLGLGLLTSTGSKWRTRRKMLTPTFHFTILENFLDVMNEQANILVNKLEKHVNQEAFNCFFYITLCALDIICETAMGKNIGAQSNNDSEYVRTVYRMSDMIYRRMKMPWLWFDLWYLVFKEGRDHKRGLKCLHTFTNNVIAERVKERKAEEDWTGAGRGPIPSKNKRKAFLDLLLSVTDEEGNRLSQEDIREEVDTFMFEGHDTTAAAINWSLYLLGTNPEVQRKVDQELDEVFGRSHRPVTLEDLKKLKYLDCVIKETLRVFPSVPLFARSLSEDCEVGGYKVTKGTEAIIIPYALHRDPRYFPDPEEFRPERFFPENSQGRHPYAYVPFSAGPRNCIGQKFAVMEEKTILACILRQFWVESNQKREELGLAGDLILRPNNGIWIKLKRRHEDDP.

A helical transmembrane segment spans residues 14–34 (LLWGAASAVSLAGATILISIF). The heme site is built by Glu329 and Cys467.

Belongs to the cytochrome P450 family. Requires heme as cofactor.

Its subcellular location is the endoplasmic reticulum membrane. The enzyme catalyses dodecanoate + reduced [NADPH--hemoprotein reductase] + O2 = 12-hydroxydodecanoate + oxidized [NADPH--hemoprotein reductase] + H2O + H(+). It catalyses the reaction tetradecanoate + reduced [NADPH--hemoprotein reductase] + O2 = 14-hydroxytetradecanoate + oxidized [NADPH--hemoprotein reductase] + H2O + H(+). It carries out the reaction hexadecanoate + reduced [NADPH--hemoprotein reductase] + O2 = 16-hydroxyhexadecanoate + oxidized [NADPH--hemoprotein reductase] + H2O + H(+). The catalysed reaction is (5Z,8Z,11Z,14Z,17Z)-eicosapentaenoate + reduced [NADPH--hemoprotein reductase] + O2 = 20-hydroxy-(5Z,8Z,11Z,14Z,17Z)-eicosapentaenoate + oxidized [NADPH--hemoprotein reductase] + H2O + H(+). The enzyme catalyses (4Z,7Z,10Z,13Z,16Z,19Z)-docosahexaenoate + reduced [NADPH--hemoprotein reductase] + O2 = 22-hydroxy-(4Z,7Z,10Z,13Z,16Z,19Z)-docosahexaenoate + oxidized [NADPH--hemoprotein reductase] + H2O + H(+). It functions in the pathway lipid metabolism; fatty acid metabolism. Its activity is regulated as follows. Inhibited by N-hydroxy-N'-(4-n-butyl-2-methylphenyl formamidine)(HET0016) with an IC(50) of 38 nM. In terms of biological role, a cytochrome P450 monooxygenase involved in fatty acid metabolism in the eye. Catalyzes the omega-hydroxylation of polyunsaturated fatty acids (PUFAs) docosahexaenoate (DHA) and its precursor eicosapentaenoate (EPA), and may contribute to the homeostasis of these retinal PUFAs. Omega hydroxylates saturated fatty acids such as laurate, myristate and palmitate, the catalytic efficiency decreasing in the following order: myristate &gt; laurate &gt; palmitate (C14&gt;C12&gt;C16). Mechanistically, uses molecular oxygen inserting one oxygen atom into a substrate, and reducing the second into a water molecule, with two electrons provided by NADPH via cytochrome P450 reductase (CPR; NADPH-ferrihemoprotein reductase). This chain is Cytochrome P450 4V2 (Cyp4v2), found in Mus musculus (Mouse).